The primary structure comprises 166 residues: Regulatory protein RecX (166 aa).

It belongs to the RecX family.

It is found in the cytoplasm. Modulates RecA activity. The protein is Regulatory protein RecX of Escherichia coli (strain SMS-3-5 / SECEC).